A 316-amino-acid polypeptide reads, in one-letter code: BTB/POZ domain-containing adapter for CUL3-mediated RhoA degradation protein 2 (316 aa).

In terms of domain architecture, BTB spans 28–96 (KYVQLNVGGS…LRDDTITLPQ (69 aa)). Positions 268-279 (EATSRSRSQASP) are enriched in polar residues. Positions 268–287 (EATSRSRSQASPSEDEETFE) are disordered. Position 278 is a phosphoserine (S278). Phosphoserine; by CK2 is present on S280.

It belongs to the BACURD family. Component of the BCR(TNFAIP1) E3 ubiquitin ligase complex, at least composed of CUL3, TNFAIP1/BACURD2 and RBX1. Interacts with RHOA; with a preference for RhoA-GDP. Interacts with RHOB. Interacts with PCNA. Interacts with CSNK2B. Phosphorylation at Ser-280 by CK2 facilitates the nucleus localization and increases interaction with PCNA.

The protein localises to the cytoplasm. It localises to the nucleus. The protein resides in the endosome. Its pathway is protein modification; protein ubiquitination. Its function is as follows. Substrate-specific adapter of a BCR (BTB-CUL3-RBX1) E3 ubiquitin-protein ligase complex involved in regulation of cytoskeleton structure. The BCR(TNFAIP1) E3 ubiquitin ligase complex mediates the ubiquitination of RHOA, leading to its degradation by the proteasome, thereby regulating the actin cytoskeleton and cell migration. Its interaction with RHOB may regulate apoptosis. May enhance the PCNA-dependent DNA polymerase delta activity. The protein is BTB/POZ domain-containing adapter for CUL3-mediated RhoA degradation protein 2 (TNFAIP1) of Homo sapiens (Human).